The chain runs to 85 residues: Putative plasmid stability protein y4jJ (85 aa).

Basic and acidic residues predominate over residues 66–78; sequence EAEHFNQLRDKTP. Residues 66 to 85 are disordered; sequence EAEHFNQLRDKTPAEPMSFE.

The protein to P.syringae pv tomato plasmid stability protein StbC.

Functionally, involved in plasmid stability. The sequence is that of Putative plasmid stability protein y4jJ from Sinorhizobium fredii (strain NBRC 101917 / NGR234).